A 338-amino-acid polypeptide reads, in one-letter code: High mobility group B protein 9 (338 aa).

In terms of domain architecture, ARID spans 38-129; sequence VKDSSVFWDT…LLFHYEQVHL (92 aa). The segment at 233–259 is disordered; that stretch reads TGRRRRRLGKRRRSRRREDPNYPKPNR. Over residues 235-247 the composition is skewed to basic residues; the sequence is RRRRRLGKRRRSR. A DNA-binding region (HMG box) is located at residues 255–322; the sequence is PKPNRSGYNF…RYQRELNEYR (68 aa).

In terms of tissue distribution, predominantly expressed in leaves, flowers and seedlings.

The protein localises to the nucleus. Binds preferentially DNA with A/T-rich content. Required for karyogamy during female gametophyte development, when the two polar nuclei fuse to form the diploid central cell nucleus. This Arabidopsis thaliana (Mouse-ear cress) protein is High mobility group B protein 9 (HMGB9).